The chain runs to 96 residues: LQDAEDSSRFDADDTLAGEARELSTPKXHSEGTFSNDYSKYLETRRAQDFVQWLKNSXXXXXXXXHADGTFTSDVSSYLNDQAIKDFVAKLKSGKV.

2 stretches are compositionally biased toward basic and acidic residues: residues 1 to 12 and 19 to 30; these read LQDAEDSSRFDA and EARELSTPKXHS. The segment at 1-35 is disordered; sequence LQDAEDSSRFDADDTLAGEARELSTPKXHSEGTFS.

The protein belongs to the glucagon family.

It localises to the secreted. Plays a key role in glucose metabolism and homeostasis. Regulates blood glucose by increasing gluconeogenesis and decreasing glycolysis. This Myoxocephalus scorpius (Shorthorn sculpin) protein is Pro-glucagon (gcg).